The sequence spans 481 residues: Glutamate--tRNA ligase 2 (481 aa).

Positions 17–27 (PSPTGFLHIGG) match the 'HIGH' region motif. The segment covering 118-139 (AEQRAKKQPQRYDGRWRDRDPS) has biased composition (basic and acidic residues). Positions 118–143 (AEQRAKKQPQRYDGRWRDRDPSEAPA) are disordered. The 'KMSKS' region motif lies at 246 to 250 (KLSKR). Residue lysine 249 participates in ATP binding.

This sequence belongs to the class-I aminoacyl-tRNA synthetase family. Glutamate--tRNA ligase type 1 subfamily. Monomer.

The protein resides in the cytoplasm. It catalyses the reaction tRNA(Glu) + L-glutamate + ATP = L-glutamyl-tRNA(Glu) + AMP + diphosphate. Functionally, catalyzes the attachment of glutamate to tRNA(Glu) in a two-step reaction: glutamate is first activated by ATP to form Glu-AMP and then transferred to the acceptor end of tRNA(Glu). This Zymomonas mobilis subsp. mobilis (strain ATCC 31821 / ZM4 / CP4) protein is Glutamate--tRNA ligase 2.